Consider the following 264-residue polypeptide: Small ribosomal subunit protein uS2 (264 aa).

It belongs to the universal ribosomal protein uS2 family.

This chain is Small ribosomal subunit protein uS2, found in Latilactobacillus sakei subsp. sakei (strain 23K) (Lactobacillus sakei subsp. sakei).